The primary structure comprises 287 residues: Ribosomal RNA small subunit methyltransferase A (287 aa).

The S-adenosyl-L-methionine site is built by Asn-28, Leu-30, Gly-55, Glu-76, Asp-101, and Asn-125.

It belongs to the class I-like SAM-binding methyltransferase superfamily. rRNA adenine N(6)-methyltransferase family. RsmA subfamily.

Its subcellular location is the cytoplasm. It catalyses the reaction adenosine(1518)/adenosine(1519) in 16S rRNA + 4 S-adenosyl-L-methionine = N(6)-dimethyladenosine(1518)/N(6)-dimethyladenosine(1519) in 16S rRNA + 4 S-adenosyl-L-homocysteine + 4 H(+). Its function is as follows. Specifically dimethylates two adjacent adenosines (A1518 and A1519) in the loop of a conserved hairpin near the 3'-end of 16S rRNA in the 30S particle. May play a critical role in biogenesis of 30S subunits. This Alkaliphilus metalliredigens (strain QYMF) protein is Ribosomal RNA small subunit methyltransferase A.